The sequence spans 744 residues: Glucosamine inositolphosphorylceramide transferase 1 (744 aa).

3 consecutive transmembrane segments (helical) span residues 31–51 (FLVA…WLVV), 378–398 (SLFG…VGFV), and 460–480 (LFFC…VHFL). Substrate-binding positions include Asn-534, 558 to 563 (NSLNNR), 579 to 581 (DDD), Arg-609, and 665 to 669 (FNCED). Mn(2+) is bound at residue Asp-581. Cys-667 and Cys-718 are joined by a disulfide. The active site involves Asp-669.

The protein belongs to the glycosyltransferase 64 family. Mn(2+) serves as cofactor. As to expression, highly expressed in almost all tissues.

The protein resides in the membrane. Its pathway is sphingolipid metabolism. Its function is as follows. Essential protein. Glycosyltransferase that mediates the glycosylation of glycosylinositol phosphorylceramides (GIPCs), the major sphingolipids in the plasma membrane; acts as a HexN(Ac)-specific GIPC sugar transferase. Responsible for the glycosylation of a subgroup of GIPCs found in seeds and pollen that contain GlcNAc and GlcN (GlcN(Ac)). Maybe involved in the maintenance of cell-cell adhesion. This is Glucosamine inositolphosphorylceramide transferase 1 from Oryza sativa subsp. japonica (Rice).